The following is a 187-amino-acid chain: Homeobox protein engrailed-like ceh-16 (187 aa).

Disordered regions lie at residues 14-43 (PYPC…NGTP), 60-100 (SDRP…DQLD), and 144-167 (KSTS…HPSI). The segment covering 20 to 39 (PTISTPATSPSSISPTFASP) has biased composition (low complexity). The homeobox DNA-binding region spans 87–146 (EKRPRTAFTGDQLDRLKTEFRESRYLTEKRRQELAHELGLNESQIKIWFQNKRAKLKKST). The segment covering 145 to 163 (STSSVPRDRCSSVTPNPHN) has biased composition (polar residues).

The protein belongs to the engrailed homeobox family. As to expression, expressed in seam cells.

The protein resides in the nucleus. It localises to the cytoplasm. Its function is as follows. Transcriptional regulator which binds to DNA to regulate gene expression and promote seam cell development and differentiation during embryogenesis. Plays a role in maintaining the boundaries between the lateral rows of seam cells and the ventral and dorsal row of epidermal cells during embryonic development. Negatively regulates the expression of the fusion effector protein eff-1 to prevent seam cell fusion with the dorsal and ventral epidermal cells during embryonic elongation. Positively regulates seam cell self-renewal and expansion during the L2 larval stage to promote seam cell development. This role does not seem to be via regulation of eff-1 expression. Specifically, it is required for the asymmetric division of the V5.p seam cell during the L2 larval stage, and in turn the asymmetric nuclear distribution of pop-1 in V5.p daughter cells. This is Homeobox protein engrailed-like ceh-16 from Caenorhabditis elegans.